We begin with the raw amino-acid sequence, 160 residues long: Ribosomal RNA large subunit methyltransferase H (160 aa).

Residues Leu76, Gly108, and 127-132 (LGKMTW) contribute to the S-adenosyl-L-methionine site.

Belongs to the RNA methyltransferase RlmH family. In terms of assembly, homodimer.

It localises to the cytoplasm. It carries out the reaction pseudouridine(1915) in 23S rRNA + S-adenosyl-L-methionine = N(3)-methylpseudouridine(1915) in 23S rRNA + S-adenosyl-L-homocysteine + H(+). Its function is as follows. Specifically methylates the pseudouridine at position 1915 (m3Psi1915) in 23S rRNA. The chain is Ribosomal RNA large subunit methyltransferase H from Rhizobium etli (strain ATCC 51251 / DSM 11541 / JCM 21823 / NBRC 15573 / CFN 42).